A 153-amino-acid chain; its full sequence is Endoribonuclease YbeY (153 aa).

Zn(2+) contacts are provided by histidine 114, histidine 118, and histidine 124.

Belongs to the endoribonuclease YbeY family. Zn(2+) is required as a cofactor.

Its subcellular location is the cytoplasm. Its function is as follows. Single strand-specific metallo-endoribonuclease involved in late-stage 70S ribosome quality control and in maturation of the 3' terminus of the 16S rRNA. This chain is Endoribonuclease YbeY, found in Shewanella baltica (strain OS155 / ATCC BAA-1091).